A 240-amino-acid polypeptide reads, in one-letter code: Urease accessory protein UreF (240 aa).

This sequence belongs to the UreF family. UreD, UreF and UreG form a complex that acts as a GTP-hydrolysis-dependent molecular chaperone, activating the urease apoprotein by helping to assemble the nickel containing metallocenter of UreC. The UreE protein probably delivers the nickel.

The protein resides in the cytoplasm. In terms of biological role, required for maturation of urease via the functional incorporation of the urease nickel metallocenter. This Bradyrhizobium sp. (strain ORS 278) protein is Urease accessory protein UreF.